The primary structure comprises 123 residues: Holo-[acyl-carrier-protein] synthase (123 aa).

Positions 8 and 55 each coordinate Mg(2+).

It belongs to the P-Pant transferase superfamily. AcpS family. Requires Mg(2+) as cofactor.

It is found in the cytoplasm. The catalysed reaction is apo-[ACP] + CoA = holo-[ACP] + adenosine 3',5'-bisphosphate + H(+). In terms of biological role, transfers the 4'-phosphopantetheine moiety from coenzyme A to a Ser of acyl-carrier-protein. This is Holo-[acyl-carrier-protein] synthase from Solidesulfovibrio magneticus (strain ATCC 700980 / DSM 13731 / RS-1) (Desulfovibrio magneticus).